We begin with the raw amino-acid sequence, 308 residues long: Ribonuclease 3 (308 aa).

The region spanning 20–145 is the RNase III domain; the sequence is YLRFYKMLGF…LVGAIYLDRG (126 aa). Glu-62 is a Mg(2+) binding site. The active site involves Asp-66. Residues Asn-131 and Glu-134 each coordinate Mg(2+). Glu-134 is a catalytic residue. The DRBM domain occupies 173 to 242; that stretch reads NFKSKLIEWS…ARVALGKIKN (70 aa). Positions 261–281 are disordered; it reads QEEVTVSDSKPSDSGAVTPDL.

Belongs to the ribonuclease III family. As to quaternary structure, homodimer. It depends on Mg(2+) as a cofactor.

It localises to the cytoplasm. The enzyme catalyses Endonucleolytic cleavage to 5'-phosphomonoester.. In terms of biological role, digests double-stranded RNA. Involved in the processing of primary rRNA transcript to yield the immediate precursors to the large and small rRNAs (23S and 16S). Processes some mRNAs, and tRNAs when they are encoded in the rRNA operon. Processes pre-crRNA and tracrRNA of type II CRISPR loci if present in the organism. The chain is Ribonuclease 3 from Phocaeicola vulgatus (strain ATCC 8482 / DSM 1447 / JCM 5826 / CCUG 4940 / NBRC 14291 / NCTC 11154) (Bacteroides vulgatus).